Consider the following 554-residue polypeptide: MNFIEAALLIQGSACVYSKKVEYLYSLVYQALDFISGKRRAKQLSLVQEDGSNRAVNSGTPCETEDEFLSLDDFPDSRANVDLKNDQASSELLIIPLLPMALVAPDEVEKSSNPLYSCQGEVLASRKDFRMNTCTPDPRGSFMLDPVGMCPVEPVDVHPMPRSQKDAEEAEEQPMAVSRNGSPVSVRSISQEPDGPALSSGDEDAEDVAELPEVALEPAEPRTSQQTAILPRRYMLRERQGAPEPASQPQETPDPWQSLDPFDSLDSKLFQKGKPYSVPPGVEEAPGQKRKRKGATKLQDFHQWYLDAYAEHPDGRRARRKGPSFADMEVLYWKHVKEQLETLQKLRRRKMTERWLPGAKQDLWPAEEERLEEPLEDLGVADDFLEAEEYVEESEGVMPREAAGLDAEAIPESLKYEELVRRNVELFIATSQKFIQETELSQRIRDWEDTIQPLLQEQEQHVPFDIHTYGDQLVSRFPQLNEWCPFAELVAGQPAFEVCRSMLASLQLANDYTVEITQQPGLEAAVDTMSLRLLTHQRAHMRFQTYAAPSMAQP.

Residues S45, S178, S182, S199, and S200 each carry the phosphoserine modification. The disordered stretch occupies residues 154 to 296 (PVDVHPMPRS…GQKRKRKGAT (143 aa)). Residues 179-191 (RNGSPVSVRSISQ) are compositionally biased toward polar residues. A compositionally biased stretch (acidic residues) spans 201–210 (GDEDAEDVAE). Position 441 is a phosphoserine (S441).

It belongs to the CND2 H2 (condensin-2 subunit 2) family. In terms of assembly, component of the condensin-2 complex, which contains the SMC2 and SMC4 heterodimer, and three non SMC subunits, NCAPG2, NCAPH2 and NCAPD3 that probably regulate the complex.

The protein localises to the nucleus. Its function is as follows. Regulatory subunit of the condensin-2 complex, a complex that seems to provide chromosomes with an additional level of organization and rigidity and in establishing mitotic chromosome architecture. May promote the resolution of double-strand DNA catenanes (intertwines) between sister chromatids. Condensin-mediated compaction likely increases tension in catenated sister chromatids, providing directionality for type II topoisomerase-mediated strand exchanges toward chromatid decatenation. Required for decatenation of chromatin bridges at anaphase. Early in neurogenesis, may play an essential role to ensure accurate mitotic chromosome condensation in neuron stem cells, ultimately affecting neuron pool and cortex size. Seems to have lineage-specific role in T-cell development. The sequence is that of Condensin-2 complex subunit H2 (Ncaph2) from Rattus norvegicus (Rat).